The chain runs to 767 residues: Cullin-1 (767 aa).

Residues Asp699–Arg760 form the Cullin neddylation domain. A Glycyl lysine isopeptide (Lys-Gly) (interchain with G-Cter in NEDD8) cross-link involves residue Lys713.

It belongs to the cullin family. Component of multiple Cul1-RING E3 ubiquitin-protein ligase complexes commonly known as SCF (SKP1-CUL1-F-box) complexes, consisting of cul1, skp1, pip1 and a variable F-box domain-containing protein as substrate-specific subunit. Binds to the pop1 homodimer, the pop2 homodimer and the pop1/pop2 heterodimer forming the SCF(pop1-pop2) complex. Interacts with pof3, pof14 and skp1. In terms of processing, neddylated; enhancing the ubiquitin-ligase activity.

The protein resides in the cytoplasm. Its pathway is protein modification; protein ubiquitination. Core component of multiple cullin-RING-based SCF (SKP1-CUL1-F-box protein) E3 ubiquitin-protein ligase complexes, which mediate the ubiquitination of target proteins. The functional specificity of the SCF complex depends on the F-box protein as substrate recognition component. SCF(pop1-pop2) is required for the maintenance of ploidy and directs ubiquitination of cig2. The protein is Cullin-1 (cul1) of Schizosaccharomyces pombe (strain 972 / ATCC 24843) (Fission yeast).